A 241-amino-acid polypeptide reads, in one-letter code: Methylcarbamoylase mom (241 aa).

Fe cation is bound by residues Y59, D149, and Y159.

Belongs to the mulikevirus mom protein family. Fe(2+) is required as a cofactor. Requires Fe(3+) as cofactor.

It localises to the host cytoplasm. The enzyme catalyses a 2'-deoxyadenosine in DNA + acetyl-CoA + AH2 + NH4(+) + O2 = a N(6)-methylcarbamoyl-2'-deoxyadenosine in DNA + A + CoA + 2 H2O + H(+). Iron-binding protein that performs methylcarbamoylation of adenine using acetyl CoA. This chemical modificaltion makes the viral DNA resistant to a variety of host type I and type II restriction enzymes by modifying approximately 15% of DNA adenine residues. The modification called momylation changes adenine for N6-methylcarbamoyl adenine and occurs just before packaging. Target sequences are 5'-(C or G)-A-(Cor G)-N-(C or T)-3'. Also usually modifies adenine residues in the host cellular DNA. In Escherichia phage Mu (Bacteriophage Mu), this protein is Methylcarbamoylase mom (mom).